The sequence spans 859 residues: Leucine--tRNA ligase (859 aa).

Positions 42–52 (PYPSGKLHMGH) match the 'HIGH' region motif. A 'KMSKS' region motif is present at residues 618–622 (KMSKS). Lys-621 contributes to the ATP binding site.

Belongs to the class-I aminoacyl-tRNA synthetase family.

Its subcellular location is the cytoplasm. It catalyses the reaction tRNA(Leu) + L-leucine + ATP = L-leucyl-tRNA(Leu) + AMP + diphosphate. The polypeptide is Leucine--tRNA ligase (Buchnera aphidicola subsp. Acyrthosiphon pisum (strain APS) (Acyrthosiphon pisum symbiotic bacterium)).